Reading from the N-terminus, the 311-residue chain is Cytosolic Fe-S cluster assembly factor Nubp1 homolog (311 aa).

Residues 1 to 20 are disordered; sequence MQAPPPEHCPGVESENAGKG. [4Fe-4S] cluster contacts are provided by Cys9, Cys23, Cys26, and Cys32. 63-70 contacts ATP; it reads GKGGVGKS. Cys240 and Cys243 together coordinate [4Fe-4S] cluster.

Belongs to the Mrp/NBP35 ATP-binding proteins family. NUBP1/NBP35 subfamily. Heterotetramer of 2 Nubp1 and 2 Nubp2 chains. [4Fe-4S] cluster serves as cofactor.

The protein resides in the cytoplasm. Component of the cytosolic iron-sulfur (Fe/S) protein assembly (CIA) machinery. Required for maturation of extramitochondrial Fe-S proteins. The Nubp1-Nubp2 heterotetramer forms a Fe-S scaffold complex, mediating the de novo assembly of an Fe-S cluster and its transfer to target apoproteins. This Drosophila simulans (Fruit fly) protein is Cytosolic Fe-S cluster assembly factor Nubp1 homolog.